Reading from the N-terminus, the 244-residue chain is Small ribosomal subunit protein eS4 (244 aa).

Residues Leu-43–Glu-106 form the S4 RNA-binding domain.

Belongs to the eukaryotic ribosomal protein eS4 family.

The chain is Small ribosomal subunit protein eS4 from Methanococcus maripaludis (strain C7 / ATCC BAA-1331).